We begin with the raw amino-acid sequence, 319 residues long: Acetaldehyde dehydrogenase 1 (319 aa).

Cys-129 functions as the Acyl-thioester intermediate in the catalytic mechanism. NAD(+) contacts are provided by residues 160–168 (SAGPGTRAN) and Asn-287.

This sequence belongs to the acetaldehyde dehydrogenase family.

It catalyses the reaction acetaldehyde + NAD(+) + CoA = acetyl-CoA + NADH + H(+). The polypeptide is Acetaldehyde dehydrogenase 1 (Burkholderia lata (strain ATCC 17760 / DSM 23089 / LMG 22485 / NCIMB 9086 / R18194 / 383)).